Reading from the N-terminus, the 1077-residue chain is Hemoglobin and hemoglobin-haptoglobin-binding protein A (1077 aa).

A signal peptide spans methionine 1–alanine 24. The segment at glutamate 25–asparagine 72 is disordered. Repeat copies occupy residues proline 26–glutamine 29, proline 30–glutamine 33, proline 34–glutamine 37, proline 38–glutamine 41, proline 42–glutamine 45, proline 46–glutamine 49, proline 50–glutamine 53, proline 54–glutamine 57, proline 58–glutamine 61, proline 62–glutamine 65, and proline 66–glutamine 69. The tract at residues proline 26–glutamine 69 is 11 X 4 AA tandem repeats of P-T-N-Q. Low complexity predominate over residues proline 26 to asparagine 70. The short motif at glutamate 78–serine 85 is the TonB box element. The TBDR plug domain maps to threonine 89–lysine 216. In terms of domain architecture, TBDR beta-barrel spans asparagine 224–phenylalanine 1077. The TonB C-terminal box signature appears at asparagine 1060 to phenylalanine 1077.

Belongs to the TonB-dependent receptor family. Hemoglobin/haptoglobin binding protein subfamily.

The protein resides in the cell outer membrane. Its function is as follows. Acts as a receptor for hemoglobin or the hemoglobin/haptoglobin complex of the human host and is required for heme uptake. The polypeptide is Hemoglobin and hemoglobin-haptoglobin-binding protein A (hgpA) (Haemophilus influenzae).